We begin with the raw amino-acid sequence, 918 residues long: Isoleucine--tRNA ligase (918 aa).

The 'HIGH' region signature appears at 57–67; sequence PYANGHIHIGT. Glu-552 lines the L-isoleucyl-5'-AMP pocket. A 'KMSKS' region motif is present at residues 593–597; the sequence is KMSKS. Lys-596 is an ATP binding site. Cys-886, Cys-889, Cys-906, and Cys-909 together coordinate Zn(2+).

The protein belongs to the class-I aminoacyl-tRNA synthetase family. IleS type 1 subfamily. In terms of assembly, monomer. Requires Zn(2+) as cofactor.

It localises to the cytoplasm. The enzyme catalyses tRNA(Ile) + L-isoleucine + ATP = L-isoleucyl-tRNA(Ile) + AMP + diphosphate. Functionally, catalyzes the attachment of isoleucine to tRNA(Ile). As IleRS can inadvertently accommodate and process structurally similar amino acids such as valine, to avoid such errors it has two additional distinct tRNA(Ile)-dependent editing activities. One activity is designated as 'pretransfer' editing and involves the hydrolysis of activated Val-AMP. The other activity is designated 'posttransfer' editing and involves deacylation of mischarged Val-tRNA(Ile). This chain is Isoleucine--tRNA ligase, found in Thermotoga neapolitana (strain ATCC 49049 / DSM 4359 / NBRC 107923 / NS-E).